The following is an 813-amino-acid chain: Microtubule-associated protein 6 (813 aa).

S-palmitoyl cysteine attachment occurs at residues C5, C10, and C11. 3 disordered regions span residues 36 to 283 (ATEH…AAAD), 314 to 651 (VKPI…KDES), and 756 to 813 (PLKD…ESSP). Residues 41 to 50 (GAPPQPPPPQ) are compositionally biased toward pro residues. The segment covering 51-62 (QQAQPALAPPSA) has biased composition (low complexity). Over residues 100–112 (GRSGPGPGLGSGS) the composition is skewed to gly residues. S102 is modified (phosphoserine). The segment at 118-141 (DSVMRQDYRAWKVQRPEPSCRPRS) is mn 1. Positions 121-141 (MRQDYRAWKVQRPEPSCRPRS) are enriched in basic and acidic residues. Positions 126–140 (RAWKVQRPEPSCRPR) are calmodulin-binding. Residue Y143 is modified to Phosphotyrosine. Positions 149–173 (PFERETQYQKDFRAWPLPRRGDHPW) are enriched in basic and acidic residues. The mn 2 stretch occupies residues 153–176 (ETQYQKDFRAWPLPRRGDHPWIPK). A calmodulin-binding region spans residues 162–176 (AWPLPRRGDHPWIPK). S187 is modified (phosphoserine). Calmodulin-binding stretches follow at residues 189 to 203 (PILGAPKRRPQSQER), 306 to 320 (RAWTDIKPVKPIKAK), 357 to 371 (RRRIRSLYSEPFKEP), and 384 to 398 (PKKTSASHKPTRKAK). The tract at residues 298–321 (SSSYRNEFRAWTDIKPVKPIKAKP) is mn 3. Residues 367–376 (PFKEPPKVEK) are compositionally biased toward basic and acidic residues. Over residues 383-398 (KPKKTSASHKPTRKAK) the composition is skewed to basic residues. Over residues 420-439 (KPDDKEQSKEMNNKLAEAKE) the composition is skewed to basic and acidic residues. A compositionally biased stretch (polar residues) spans 443–454 (QPVSDSSKTQGP). The segment covering 637 to 651 (KDQDPMVPEHPKDES) has biased composition (basic and acidic residues). S812 is subject to Phosphoserine.

It belongs to the STOP family. As to quaternary structure, interacts with calmodulin (via C-terminus); the interaction is dependent on Ca(2+). Interacts (via C-terminus) with TMEM106B (via N-terminus). Interacts with ZDHHC17 (via ANK repeats). Interacts with ZDHHC13 (via ANK repeats). Post-translationally, palmitoylated. Probably depalmitoylated by ABHD17A, ABHD17B and ABHD17C. During neuronal polarization, palmitoylation and depalmitoylation cycles regulate MAP6 shuttling between secretory vesicles and microtubules, and its polarized distribution in the axon. As to expression, expressed in brain (at protein level). Expressed in spinal cord. Isoform 2 expression is up-regulated in the prefrontal cortex (Brodmann's area 46) of patients with schizophrenia (postmortem brain study).

It is found in the cytoplasm. It localises to the cytoskeleton. The protein resides in the golgi apparatus. Its subcellular location is the cell projection. The protein localises to the axon. It is found in the dendrite. It localises to the cytoplasmic vesicle. The protein resides in the secretory vesicle membrane. Functionally, involved in microtubule stabilization in many cell types, including neuronal cells. Specifically has microtubule cold stabilizing activity. Involved in dendrite morphogenesis and maintenance by regulating lysosomal trafficking via its interaction with TMEM106B. Regulates KIF5A-mediated axonal cargo transport. Regulates axonal growth during neuron polarization. This chain is Microtubule-associated protein 6 (MAP6), found in Homo sapiens (Human).